A 387-amino-acid polypeptide reads, in one-letter code: Phosphoglycerate kinase (387 aa).

Substrate is bound by residues 21–23 (DLN), Arg-36, 59–62 (HLGR), Arg-113, and Arg-146. ATP-binding positions include Lys-197, Glu-314, and 340–343 (GGDT).

The protein belongs to the phosphoglycerate kinase family. As to quaternary structure, monomer.

The protein localises to the cytoplasm. The enzyme catalyses (2R)-3-phosphoglycerate + ATP = (2R)-3-phospho-glyceroyl phosphate + ADP. Its pathway is carbohydrate degradation; glycolysis; pyruvate from D-glyceraldehyde 3-phosphate: step 2/5. In Aeromonas hydrophila subsp. hydrophila (strain ATCC 7966 / DSM 30187 / BCRC 13018 / CCUG 14551 / JCM 1027 / KCTC 2358 / NCIMB 9240 / NCTC 8049), this protein is Phosphoglycerate kinase.